The following is a 272-amino-acid chain: Undecaprenyl-diphosphatase (272 aa).

8 consecutive transmembrane segments (helical) span residues 4-24 (FEVIKALFLGFVEGLTEFLPI), 43-63 (GGRVFEVVIQLGAILAVCWLY), 86-106 (ISVLIAFFPAVIIGVLAVDFI), 109-129 (VLFSPIVVAIALIVGALIIFW), 145-165 (ITFKQALLVGLAQCVAMIPGT), 186-206 (TEFSFFLAMPTMLGAATFDLI), 222-242 (VGFVAAFIAALLVVKALVLFV), and 249-269 (VFAWYRIVLGVIILIAAMFFN).

This sequence belongs to the UppP family.

It is found in the cell inner membrane. The enzyme catalyses di-trans,octa-cis-undecaprenyl diphosphate + H2O = di-trans,octa-cis-undecaprenyl phosphate + phosphate + H(+). Functionally, catalyzes the dephosphorylation of undecaprenyl diphosphate (UPP). Confers resistance to bacitracin. In Acinetobacter baumannii (strain SDF), this protein is Undecaprenyl-diphosphatase.